The following is an 82-amino-acid chain: UPF0248 protein Mevan_1298 (82 aa).

The protein belongs to the UPF0248 family.

The polypeptide is UPF0248 protein Mevan_1298 (Methanococcus vannielii (strain ATCC 35089 / DSM 1224 / JCM 13029 / OCM 148 / SB)).